The following is a 174-amino-acid chain: Probasin (174 aa).

A signal peptide spans 1–18 (MMRVIILLLTLHVLGVSS). A disulfide bridge links Cys-77 with Cys-168.

Belongs to the calycin superfamily. Lipocalin family.

The protein localises to the secreted. In Mus musculus (Mouse), this protein is Probasin (Pbsn).